The primary structure comprises 296 residues: GTP-binding protein GEM (296 aa).

2 disordered regions span residues 1-20 and 37-68; these read MTLNNVTMRQGTVGMQPQQQ and PHQYSHRNRHSATPEDHCRRSWSSDSTDSVIS. Positions 57–68 are enriched in low complexity; it reads SWSSDSTDSVIS. GTP is bound by residues 82 to 89 and 191 to 194; these read GEQGVGKS and NKSD. The interval 266 to 285 is calmodulin-binding; the sequence is ARRFWGKIVAKNNKNMAFKL.

It belongs to the small GTPase superfamily. RGK family. In terms of assembly, interacts with calmodulin in a Ca(2+)-dependent manner. Binds ROCK1. In terms of processing, phosphorylated on tyrosine residues.

It is found in the cell membrane. Functionally, could be a regulatory protein, possibly participating in receptor-mediated signal transduction at the plasma membrane. Has guanine nucleotide-binding activity but undetectable intrinsic GTPase activity. This chain is GTP-binding protein GEM (GEM), found in Pongo abelii (Sumatran orangutan).